A 533-amino-acid chain; its full sequence is Glucose-6-phosphate isomerase (533 aa).

Glu322 functions as the Proton donor in the catalytic mechanism. Catalysis depends on residues His351 and Lys455.

This sequence belongs to the GPI family.

The protein localises to the cytoplasm. It catalyses the reaction alpha-D-glucose 6-phosphate = beta-D-fructose 6-phosphate. It participates in carbohydrate biosynthesis; gluconeogenesis. The protein operates within carbohydrate degradation; glycolysis; D-glyceraldehyde 3-phosphate and glycerone phosphate from D-glucose: step 2/4. Functionally, catalyzes the reversible isomerization of glucose-6-phosphate to fructose-6-phosphate. The protein is Glucose-6-phosphate isomerase of Desulfitobacterium hafniense (strain Y51).